The chain runs to 303 residues: Elongation factor Ts (303 aa).

An involved in Mg(2+) ion dislocation from EF-Tu region spans residues 80 to 83 (TDFV).

It belongs to the EF-Ts family.

The protein localises to the cytoplasm. In terms of biological role, associates with the EF-Tu.GDP complex and induces the exchange of GDP to GTP. It remains bound to the aminoacyl-tRNA.EF-Tu.GTP complex up to the GTP hydrolysis stage on the ribosome. This Clostridium perfringens (strain SM101 / Type A) protein is Elongation factor Ts.